A 275-amino-acid polypeptide reads, in one-letter code: Gibberellin-regulated protein 14 (275 aa).

The signal sequence occupies residues 1-21 (MALSLLSVFIFFHVFTNVVFA). Residues 34 to 207 (PTPTLPSPSP…TAPPVKPPTP (174 aa)) form a disordered region. The span at 36–207 (PTLPSPSPAT…TAPPVKPPTP (172 aa)) shows a compositional bias: pro residues.

This sequence belongs to the GASA family. Post-translationally, six disulfide bonds may be present. As to expression, expressed in flower abscission zone, style, stamen filaments and lateral roots.

It localises to the secreted. Its function is as follows. Gibberellin-regulated protein that may function in hormonal controlled steps of development such as seed germination, flowering and seed maturation. The chain is Gibberellin-regulated protein 14 (GASA14) from Arabidopsis thaliana (Mouse-ear cress).